A 337-amino-acid polypeptide reads, in one-letter code: MSGSPVKRQRMESALDQLKQFTTVVADTGDFNAIDEYKPQDATTNPSLILAAAQMPAYQELVEEALAYGKRLGGSQEEQVTNAVDKLFVLFGAEILKKIPGRVSTEVDARLSFDRDAMVARARRLIELYKEAGVSKDRVLIKLASTWEGIQAGKELEEQHGIHCNMTLLFSFAQAVACAEAGVTLISPFVGRILDWHVANTDQKSYEPLEDPGVKSVTKIYNYYKKFGYKTIVMGASFRNTGEIKALAGCDFLTISPQLLGELLKDTSKLVPMLSAKAAQASPLEKVHLDEKAFRWLHNEDRMAVEKLSDGIRKFAADAVKLERMLTERMFSTENGK.

A Nuclear localization signal motif is present at residues 1 to 10; sequence MSGSPVKRQR. Residue Lys-142 is the Schiff-base intermediate with substrate of the active site. Lys-219 is subject to N6-acetyllysine. Residues Ser-237 and Ser-256 each carry the phosphoserine modification. An N6-acetyllysine mark is found at Lys-269, Lys-286, and Lys-321.

This sequence belongs to the transaldolase family. Type 1 subfamily. As to quaternary structure, homodimer. Interacts with KPNA1 and KPNA4.

It localises to the nucleus. It is found in the cytoplasm. The catalysed reaction is D-sedoheptulose 7-phosphate + D-glyceraldehyde 3-phosphate = D-erythrose 4-phosphate + beta-D-fructose 6-phosphate. The protein operates within carbohydrate degradation; pentose phosphate pathway; D-glyceraldehyde 3-phosphate and beta-D-fructose 6-phosphate from D-ribose 5-phosphate and D-xylulose 5-phosphate (non-oxidative stage): step 2/3. Catalyzes the rate-limiting step of the non-oxidative phase in the pentose phosphate pathway. Catalyzes the reversible conversion of sedheptulose-7-phosphate and D-glyceraldehyde 3-phosphate into erythrose-4-phosphate and beta-D-fructose 6-phosphate. In Sus scrofa (Pig), this protein is Transaldolase (TALDO1).